The primary structure comprises 564 residues: Phosphoinositide phospholipase C 3 (564 aa).

The region spanning Thr19 to Glu54 is the EF-hand domain. The PI-PLC X-box domain occupies His106–Lys250. Active-site residues include His121 and His167. The PI-PLC Y-box domain occupies Arg296–Leu412. The C2 domain occupies Lys406 to His539. 5 residues coordinate Ca(2+): Asp450, Asp456, Asp509, Asp511, and Asp517.

It depends on Ca(2+) as a cofactor. As to expression, expressed in leaves, roots and siliques, but not in flowers.

The protein resides in the cell membrane. The catalysed reaction is a 1,2-diacyl-sn-glycero-3-phospho-(1D-myo-inositol-4,5-bisphosphate) + H2O = 1D-myo-inositol 1,4,5-trisphosphate + a 1,2-diacyl-sn-glycerol + H(+). Its function is as follows. The production of the second messenger molecules diacylglycerol (DAG) and inositol 1,4,5-trisphosphate (IP3) is mediated by activated phosphatidylinositol-specific phospholipase C enzymes. In Arabidopsis thaliana (Mouse-ear cress), this protein is Phosphoinositide phospholipase C 3 (PLC3).